The chain runs to 247 residues: Adenosylcobinamide-GDP ribazoletransferase (247 aa).

A run of 5 helical transmembrane segments spans residues 34–54, 59–79, 113–133, 138–158, and 194–214; these read IVMFPFIGLILGGISGLIFIL, CGIPLAALFCILALALLTGGF, GGLALIFVLLAKILVVSELAL, MLAALAAACAAGRGSAVLLMY, and VLLLGMQGLATMVVTLAAIFI.

It belongs to the CobS family. Mg(2+) is required as a cofactor.

Its subcellular location is the cell inner membrane. The enzyme catalyses alpha-ribazole + adenosylcob(III)inamide-GDP = adenosylcob(III)alamin + GMP + H(+). It carries out the reaction alpha-ribazole 5'-phosphate + adenosylcob(III)inamide-GDP = adenosylcob(III)alamin 5'-phosphate + GMP + H(+). It participates in cofactor biosynthesis; adenosylcobalamin biosynthesis; adenosylcobalamin from cob(II)yrinate a,c-diamide: step 7/7. Functionally, joins adenosylcobinamide-GDP and alpha-ribazole to generate adenosylcobalamin (Ado-cobalamin). Also synthesizes adenosylcobalamin 5'-phosphate from adenosylcobinamide-GDP and alpha-ribazole 5'-phosphate. The chain is Adenosylcobinamide-GDP ribazoletransferase from Salmonella typhi.